Here is a 410-residue protein sequence, read N- to C-terminus: Thyroid hormone receptor alpha (410 aa).

Residues Met1–Gln32 form a disordered region. The segment at Met1–Gln52 is modulating. Residues Cys53, Cys56, Cys70, Cys73, Cys91, Cys97, Cys107, and Cys110 each contribute to the Zn(2+) site. NR C4-type zinc fingers lie at residues Cys53–Cys73 and Cys91–Cys115. Residues Cys53 to Asp127 constitute a DNA-binding region (nuclear receptor). In terms of domain architecture, NR LBD spans Glu163–Asp407. Arg228 and Ser277 together coordinate 3,3',5-triiodo-L-thyronine.

This sequence belongs to the nuclear hormone receptor family. NR1 subfamily. In terms of assembly, binds DNA as a dimer; homodimer and heterodimer with RXRB. Interacts with NCOA3 and NCOA6 coactivators, leading to a strong increase of transcription of target genes. Probably interacts with SFPQ. Interacts with C1D. Interacts with AKAP13. Interacts with TP53INP2. Interacts with PER2. Interacts with TACC1. The interaction with isoform alpha-1, but not alpha-2, is decreased in the presence of thyroid hormone T3.

It is found in the nucleus. It localises to the cytoplasm. In terms of biological role, nuclear hormone receptor that can act as a repressor or activator of transcription. High affinity receptor for thyroid hormones, including triiodothyronine and thyroxine. In Ovis aries (Sheep), this protein is Thyroid hormone receptor alpha (THRA).